The sequence spans 399 residues: Protein DDI1 homolog 2 (399 aa).

In terms of domain architecture, Ubiquitin-like spans 1–81 (MLLTVYCVRR…VILRQKENAD (81 aa)). A disordered region spans residues 99–134 (IAVPGTSNPQQRQLPRTQAQHSSPGEMASSPQGLDN). Polar residues predominate over residues 103–131 (GTSNPQQRQLPRTQAQHSSPGEMASSPQG). Thr104 carries the post-translational modification Phosphothreonine. 4 positions are modified to phosphoserine: Ser121, Ser128, Ser150, and Ser194. Residue Asp252 is part of the active site. A Ubiquitin-binding motif is present at residues 376–395 (EEIADQELAEAIQKSAEDAE).

Belongs to the DDI1 family. Homodimer.

The protein resides in the cytoplasm. Its subcellular location is the cytosol. It localises to the chromosome. In terms of biological role, aspartic protease that mediates the cleavage of NFE2L1/NRF1 at 'Leu-104', thereby promoting release of NFE2L1/NRF1 from the endoplasmic reticulum membrane. Ubiquitination of NFE2L1/NRF1 is a prerequisite for cleavage, suggesting that DDI2 specifically recognizes and binds ubiquitinated NFE2L1/NRF1. Seems to act as a proteasomal shuttle which links the proteasome and replication fork proteins like RTF2. Required, with DDI1, for cellular survival following replication stress. Together or redudantly with DDI1, removes RTF2 from stalled forks to allow cell cycle progression after replication stress and maintains genome integrity. This is Protein DDI1 homolog 2 from Mus musculus (Mouse).